The following is a 160-amino-acid chain: Large ribosomal subunit protein uL15 (160 aa).

Residues 1 to 13 (MKLNELRDNEGAA) show a composition bias toward basic and acidic residues. Positions 1 to 51 (MKLNELRDNEGAARKKKRVARGPGSGKGKTAGRGIKGQKSRSGVALNGYEG) are disordered. A compositionally biased stretch (gly residues) spans 23–35 (PGSGKGKTAGRGI).

The protein belongs to the universal ribosomal protein uL15 family. Part of the 50S ribosomal subunit.

Functionally, binds to the 23S rRNA. The sequence is that of Large ribosomal subunit protein uL15 from Cereibacter sphaeroides (strain ATCC 17025 / ATH 2.4.3) (Rhodobacter sphaeroides).